The sequence spans 280 residues: H-2 class II histocompatibility antigen gamma chain (280 aa).

Over 1 to 30 the chain is Cytoplasmic; sequence MDDQRDLISNHEQLPILGQRARAPESNCNR. The residue at position 9 (S9) is a Phosphoserine. The helical; Signal-anchor for type II membrane protein transmembrane segment at 31–56 threads the bilayer; sequence GVLYTSVSVLVALLLAGQATTAYFLY. At 57–280 the chain is on the extracellular side; sequence QQQGRLDKLT…TKQDMGQMFL (224 aa). Residues N114 and N120 are each glycosylated (N-linked (GlcNAc...) asparagine). Residues 194-255 enclose the Thyroglobulin type-1 domain; the sequence is LTKCQEEVSH…HTKSRGRHNC (62 aa). 3 cysteine pairs are disulfide-bonded: C197–C216, C227–C234, and C236–C255. Residues 246-268 are disordered; that stretch reads HTKSRGRHNCSEPLDMEDPSSGL. O-linked (Xyl...) (chondroitin sulfate) serine glycosylation occurs at S266.

Nonamer composed of three alpha/beta/gamma heterotrimers. Interacts with CD44; this complex is essential for the MIF-induced signaling cascade that results in B cell survival. As to quaternary structure, interacts with the mature form of CTSL; the complex survive in neutral pH environment.

Its subcellular location is the late endosome. It is found in the lysosome. It localises to the cell membrane. The protein resides in the endoplasmic reticulum membrane. The protein localises to the golgi apparatus. Its subcellular location is the trans-Golgi network. It is found in the endosome. It localises to the secreted. Its function is as follows. Plays a critical role in MHC class II antigen processing by stabilizing peptide-free class II alpha/beta heterodimers in a complex soon after their synthesis and directing transport of the complex from the endoplasmic reticulum to compartments where peptide loading of class II takes place. Enhance also the stimulation of T-cell responses through interaction with CD44. Binds to the peptide-binding site of MHC class II alpha/beta heterodimers forming an alpha-beta-CLIP complex, thereby preventing the loading of antigenic peptides to the MHC class II complex until its release by HLA-DM in the endosome. In terms of biological role, stabilizes the conformation of mature CTSL by binding to its active site and serving as a chaperone to help maintain a pool of mature enzyme in endocytic compartments and extracellular space of antigen-presenting cells (APCs). This is H-2 class II histocompatibility antigen gamma chain from Rattus norvegicus (Rat).